A 622-amino-acid chain; its full sequence is Low affinity potassium transport system protein Kup (622 aa).

12 helical membrane-spanning segments follow: residues 9 to 29 (LPAI…TSPL), 49 to 69 (VFGF…IKYL), 103 to 123 (VIMG…TPAI), 137 to 157 (PQLD…LFMI), 165 to 185 (VGKL…GLGL), 213 to 233 (VSFI…ALYA), 247 to 267 (WFTV…ALLL), 276 to 296 (PFFL…AALA), 337 to 357 (IYIP…IVSF), 363 to 383 (LAAA…ILST), 396 to 416 (FVAL…TANL), and 419 to 439 (LLSG…VMTT).

This sequence belongs to the HAK/KUP transporter (TC 2.A.72) family.

The protein localises to the cell inner membrane. The enzyme catalyses K(+)(in) + H(+)(in) = K(+)(out) + H(+)(out). Its function is as follows. Responsible for the low-affinity transport of potassium into the cell. Likely operates as a K(+):H(+) symporter. The chain is Low affinity potassium transport system protein Kup from Shigella flexneri serotype 5b (strain 8401).